A 346-amino-acid polypeptide reads, in one-letter code: Dihydroorotate dehydrogenase (quinone) (346 aa).

FMN contacts are provided by residues 62–66 (AGMDK) and T86. K66 is a substrate binding site. A substrate-binding site is contributed by 111 to 115 (NRMGF). The FMN site is built by N142 and N175. N175 provides a ligand contact to substrate. The Nucleophile role is filled by S178. N180 contributes to the substrate binding site. 2 residues coordinate FMN: K211 and V239. 240–241 (NT) is a substrate binding site. FMN is bound by residues G261, G289, and 310–311 (YT).

It belongs to the dihydroorotate dehydrogenase family. Type 2 subfamily. Monomer. FMN is required as a cofactor.

The protein resides in the cell membrane. It catalyses the reaction (S)-dihydroorotate + a quinone = orotate + a quinol. It functions in the pathway pyrimidine metabolism; UMP biosynthesis via de novo pathway; orotate from (S)-dihydroorotate (quinone route): step 1/1. In terms of biological role, catalyzes the conversion of dihydroorotate to orotate with quinone as electron acceptor. In Thermus thermophilus (strain ATCC 27634 / DSM 579 / HB8), this protein is Dihydroorotate dehydrogenase (quinone).